Here is a 215-residue protein sequence, read N- to C-terminus: MKLILLILTAYLLGSIPTGLWIGQYFYNINLREHGSGNTGTTNTFRILGLKAGAATLLIDIFKGTLATLLPVLVGASNVSPIAIGFFAVLGHTFPIFAGFKGGKAVATSAGVLLGFAPLYLLFLAAVFVLTLYLFSMISLASLTASVVAVISVLTFPAAHFLLPGYDWLLTITIVVLAAIIILRHQDNMKRIKQQSENLIPWGLNLSKQQPTNHH.

6 consecutive transmembrane segments (helical) span residues 3–23 (LILL…LWIG), 42–61 (TNTF…LIDI), 68–90 (TLLP…FAVL), 110–130 (AGVL…VFVL), 134–154 (LFSM…ISVL), and 162–182 (LLPG…AIII).

This sequence belongs to the PlsY family. As to quaternary structure, probably interacts with PlsX.

Its subcellular location is the cell membrane. The catalysed reaction is an acyl phosphate + sn-glycerol 3-phosphate = a 1-acyl-sn-glycero-3-phosphate + phosphate. Its pathway is lipid metabolism; phospholipid metabolism. Its function is as follows. Catalyzes the transfer of an acyl group from acyl-phosphate (acyl-PO(4)) to glycerol-3-phosphate (G3P) to form lysophosphatidic acid (LPA). This enzyme utilizes acyl-phosphate as fatty acyl donor, but not acyl-CoA or acyl-ACP. This is Glycerol-3-phosphate acyltransferase from Streptococcus equi subsp. zooepidemicus (strain H70).